Consider the following 426-residue polypeptide: MTQLTDAKSGIVTEEMKFVADEEKIDVNYLRKLIEKGYVVIPKNINRKTKPVGIGDNLRTKVNVNLGTSPDFIDISCELKKVEISNKYGADAIMDLSTGGNLPEIRSQIMKNTNLPIGTVPIYEVGVDSKEKYGRVIDMDEDLIFNVIERQAQEGVDFMTLHCGITKQSVDTLNKDPRKMGVVSRGGAFLTAYIMYHNKENPLYRDFDYLLEILKEHDVTLSLGDGMRPGCLQDNTDRAQIQELITLGELVDRCREKGVQVMVEGPGHVPYNNIQANMQIQKTICKNAPFYVLGPIVTDLAPGYDHITAAIGGTLAAVSGANFLCYVTPAEHVRLMKEEEVKEGLIASKIAAQAADVAKGNPVAWNKERQMADARIKHDWERQFEIALDSDKPKKMREEIPSKDEKACSVCGDYCALLMVEELGKR.

Residues asparagine 65, methionine 94, tyrosine 123, histidine 162, 184-186, 225-228, and glutamate 264 contribute to the substrate site; these read SRG and DGMR. Zn(2+) is bound at residue histidine 268. Tyrosine 291 contacts substrate. Histidine 332 contributes to the Zn(2+) binding site. Cysteine 408, cysteine 411, and cysteine 415 together coordinate [4Fe-4S] cluster.

It belongs to the ThiC family. [4Fe-4S] cluster serves as cofactor.

It carries out the reaction 5-amino-1-(5-phospho-beta-D-ribosyl)imidazole + S-adenosyl-L-methionine = 4-amino-2-methyl-5-(phosphooxymethyl)pyrimidine + CO + 5'-deoxyadenosine + formate + L-methionine + 3 H(+). It functions in the pathway cofactor biosynthesis; thiamine diphosphate biosynthesis. In terms of biological role, catalyzes the synthesis of the hydroxymethylpyrimidine phosphate (HMP-P) moiety of thiamine from aminoimidazole ribotide (AIR) in a radical S-adenosyl-L-methionine (SAM)-dependent reaction. This Methanococcus vannielii (strain ATCC 35089 / DSM 1224 / JCM 13029 / OCM 148 / SB) protein is Phosphomethylpyrimidine synthase.